The sequence spans 303 residues: WD repeat-containing protein 38 (303 aa).

WD repeat units lie at residues 24-63 (QHHG…LLWR), 66-105 (GHRG…CLHV), 108-147 (GHQR…RVHL), 150-189 (GHCD…PVVS), 195-233 (GHTG…LPLQ), 236-277 (GHTI…ETLK), and 279-303 (MLDV…AVTR).

The sequence is that of WD repeat-containing protein 38 (Wdr38) from Mus musculus (Mouse).